We begin with the raw amino-acid sequence, 164 residues long: Nitric oxide synthase, inducible (164 aa).

Position 3 (Phe3) interacts with (6R)-L-erythro-5,6,7,8-tetrahydrobiopterin. Tyr18 is a heme b binding site. Residues Phe42 to Lys62 form a calmodulin-binding region. The region spanning Cys66–Phe164 is the Flavodoxin-like domain. 9 residues coordinate FMN: Thr72, Glu73, Thr74, Lys76, Ser77, Ser118, Thr119, Ser155, and Cys162.

Belongs to the NOS family. As to quaternary structure, homodimer. The cofactor is heme b. FAD serves as cofactor. FMN is required as a cofactor. Requires (6R)-L-erythro-5,6,7,8-tetrahydrobiopterin as cofactor.

It localises to the cytoplasm. The protein resides in the cytosol. The enzyme catalyses 2 L-arginine + 3 NADPH + 4 O2 + H(+) = 2 L-citrulline + 2 nitric oxide + 3 NADP(+) + 4 H2O. Not stimulated by calcium/calmodulin. In terms of biological role, produces nitric oxide (NO) which is a messenger molecule with diverse functions throughout the body. In macrophages, NO mediates tumoricidal and bactericidal actions. Also has nitrosylase activity and mediates cysteine S-nitrosylation of cytoplasmic target proteins such COX2. In Carassius auratus (Goldfish), this protein is Nitric oxide synthase, inducible (nos2).